A 141-amino-acid chain; its full sequence is Hemoglobin subunit alpha-2 (141 aa).

Residues Val1–Arg141 form the Globin domain. His58 contributes to the O2 binding site. His87 provides a ligand contact to heme b.

It belongs to the globin family. As to quaternary structure, heterotetramer of two alpha chains and two beta chains. As to expression, red blood cells.

Its function is as follows. Involved in oxygen transport from the lung to the various peripheral tissues. The sequence is that of Hemoglobin subunit alpha-2 from Varecia variegata (Black-and-white ruffed lemur).